The following is a 229-amino-acid chain: Large ribosomal subunit protein uL1c (229 aa).

Belongs to the universal ribosomal protein uL1 family. In terms of assembly, part of the 50S ribosomal subunit.

It is found in the plastid. Its subcellular location is the chloroplast. Binds directly to 23S rRNA. Might be involved in E site tRNA release (Potential). The sequence is that of Large ribosomal subunit protein uL1c (rpl1) from Porphyra purpurea (Red seaweed).